The following is a 58-amino-acid chain: Large ribosomal subunit protein bL32 (58 aa).

Residues 1-20 show a composition bias toward basic residues; it reads MALPKHKKSKSKRDKRRTHQ. Residues 1-26 form a disordered region; it reads MALPKHKKSKSKRDKRRTHQKLTAPN.

This sequence belongs to the bacterial ribosomal protein bL32 family.

In Desulfatibacillum aliphaticivorans, this protein is Large ribosomal subunit protein bL32.